The following is a 141-amino-acid chain: Large ribosomal subunit protein uL11 (141 aa).

Belongs to the universal ribosomal protein uL11 family. Part of the ribosomal stalk of the 50S ribosomal subunit. Interacts with L10 and the large rRNA to form the base of the stalk. L10 forms an elongated spine to which L12 dimers bind in a sequential fashion forming a multimeric L10(L12)X complex. In terms of processing, one or more lysine residues are methylated.

Forms part of the ribosomal stalk which helps the ribosome interact with GTP-bound translation factors. This is Large ribosomal subunit protein uL11 from Gloeobacter violaceus (strain ATCC 29082 / PCC 7421).